Consider the following 499-residue polypeptide: DNA-directed RNA polymerase subunit Rpo2N (499 aa).

Belongs to the RNA polymerase beta chain family. In terms of assembly, part of the RNA polymerase complex.

The protein resides in the cytoplasm. The catalysed reaction is RNA(n) + a ribonucleoside 5'-triphosphate = RNA(n+1) + diphosphate. DNA-dependent RNA polymerase (RNAP) catalyzes the transcription of DNA into RNA using the four ribonucleoside triphosphates as substrates. The Rpo2 subunit (Rpo2N and Rpo2C in this organism) is implicated in DNA promoter recognition and in nucleotide binding. This is DNA-directed RNA polymerase subunit Rpo2N from Methanococcus vannielii (strain ATCC 35089 / DSM 1224 / JCM 13029 / OCM 148 / SB).